The chain runs to 164 residues: Putative lung carcinoma-associated protein 10 (164 aa).

The disordered stretch occupies residues 1–164 (MSSCPVHDCP…TQKPQTTVGQ (164 aa)). The segment covering 23–40 (GSRGALRLRGGAPGSAAG) has biased composition (low complexity). The segment covering 152–164 (MQKTQKPQTTVGQ) has biased composition (polar residues).

The protein is Putative lung carcinoma-associated protein 10 (LCA10) of Homo sapiens (Human).